An 87-amino-acid chain; its full sequence is Polyketide-8 synthase acyl carrier protein 2 (87 aa).

In terms of domain architecture, Carrier spans A8–L83. S43 carries the O-(pantetheine 4'-phosphoryl)serine modification.

Post-translationally, 4'-phosphopantetheine is transferred from CoA to a specific serine of the apo-ACP-like protein.

In terms of biological role, acyl carrier protein. This is Polyketide-8 synthase acyl carrier protein 2 from Streptomyces avermitilis (strain ATCC 31267 / DSM 46492 / JCM 5070 / NBRC 14893 / NCIMB 12804 / NRRL 8165 / MA-4680).